The following is a 256-amino-acid chain: Thiazole synthase (256 aa).

K95 (schiff-base intermediate with DXP) is an active-site residue. 1-deoxy-D-xylulose 5-phosphate contacts are provided by residues G156, 182-183 (AG), and 204-205 (NT).

The protein belongs to the ThiG family. In terms of assembly, homotetramer. Forms heterodimers with either ThiH or ThiS.

Its subcellular location is the cytoplasm. It catalyses the reaction [ThiS sulfur-carrier protein]-C-terminal-Gly-aminoethanethioate + 2-iminoacetate + 1-deoxy-D-xylulose 5-phosphate = [ThiS sulfur-carrier protein]-C-terminal Gly-Gly + 2-[(2R,5Z)-2-carboxy-4-methylthiazol-5(2H)-ylidene]ethyl phosphate + 2 H2O + H(+). The protein operates within cofactor biosynthesis; thiamine diphosphate biosynthesis. Functionally, catalyzes the rearrangement of 1-deoxy-D-xylulose 5-phosphate (DXP) to produce the thiazole phosphate moiety of thiamine. Sulfur is provided by the thiocarboxylate moiety of the carrier protein ThiS. In vitro, sulfur can be provided by H(2)S. This is Thiazole synthase from Escherichia coli O45:K1 (strain S88 / ExPEC).